The sequence spans 434 residues: Forkhead box protein A2 (434 aa).

A DNA-binding region (fork-head) is located at residues K149–K243. The span at K249 to S262 shows a compositional bias: basic and acidic residues. The segment at K249–L339 is disordered. Low complexity-rich tracts occupy residues E263–P291 and A317–H333.

It localises to the nucleus. Acts as a transcriptional activator during early development, limiting the extent of mesoderm formation in the gastrula. Binds to DNA via the target sequence 5'-GT[AC]AACA-3', with 5'-GTAAACA-3' being the preferred binding site. This is Forkhead box protein A2 from Xenopus tropicalis (Western clawed frog).